We begin with the raw amino-acid sequence, 241 residues long: MADNEEDVEAEEEYTELTDISGVGPSKAESLREAGFESVEDVRGADQSALADVSGIGNALAARIKADVGGLEVESETEAEVEEEGGEEAPDEDVETELQARGLTEKTPDLSDEDARLLTQRHRVGKPQFNRQDHHKKKRVSTSWRKPRGQLSKQRRGIKGKGDTVEAGFRSPTAVRGKHPSGFEEVRVHNVDDLEGVDGDTEAVRIASKVGARKRERIEEEAEDAGIRVLNPTYVEVEVSE.

Over residues Met1 to Glu16 the composition is skewed to acidic residues. Disordered stretches follow at residues Met1–Gln47 and Val68–Gly182. The segment covering Glu29–Gly44 has biased composition (basic and acidic residues). Residues Val73–Thr96 show a composition bias toward acidic residues. The span at Leu103–Arg116 shows a compositional bias: basic and acidic residues. Positions Asp133–Lys159 are enriched in basic residues.

This sequence belongs to the eukaryotic ribosomal protein eL32 family. As to quaternary structure, part of the 50S ribosomal subunit. Interacts weakly with protein L15.

Its function is as follows. Binds to the 23S rRNA. The chain is Large ribosomal subunit protein eL32 (rpl32e) from Haloarcula marismortui (strain ATCC 43049 / DSM 3752 / JCM 8966 / VKM B-1809) (Halobacterium marismortui).